A 30-amino-acid chain; its full sequence is Methanobactin mb-OB3b (30 aa).

Positions 1 to 19 (MTVKIAQKKVLPVIGRAAA) are excised as a propeptide. The segment at residues 20–21 (LC) is a cross-link (2-(3-methylbutanoyl)-5-hydroxyoxazole-4-carbothionic acid (Leu-Cys)). Residues cysteine 21 and cysteine 27 each contribute to the Cu(2+) site. Cysteine 24 and cysteine 29 form a disulfide bridge. Positions 26-27 (PC) form a cross-link, proline 5-hydroxy-oxazole-4-carbothionic acid (Pro-Cys).

Monomer. In the absence of copper, may exist as a dimer or an oligomer.

It is found in the secreted. The protein resides in the cytoplasm. It catalyses the reaction 2 superoxide + 2 H(+) = H2O2 + O2. In terms of biological role, chalkophore involved in scavenging, uptake and suppression of toxicity of copper. Each apo-methanobactin (apo-mb) complexes 1 Cu(2+) or Cu(1+) ion to form Cu(1+)-mb (Cu-mb) which is then taken up by the cell. Enhances growth rate in the presence of copper and reduces growth lag upon exposition to elevated levels of copper. Cu-mb contributes to the switchover from soluble methane monooxygenase (sMMO) to the membrane-bound particulate MMO (pMMO) by inducing transcription of pMMO subunit A. It also stimulates the enzymatic activity of pMMO. In the absence of copper, binds other metal ions, like Zn(2+), Ag(1+), Au(3+), Co(2+), Cd(2+), Fe(3+), Hg(2+), Mn(2+), Ni(2+), Pb(2+) or U(6+), but not Ba(2+), Ca(2+), La(2+), Mg(2+) or Sr(2+). Uptake is an active process, which may involve TonB-dependent transporters, and as such does not involve porins. Cu-Mb can be taken up by other methanotrophic bacteria but not by E.coli. Has Cu-dependent superoxide dismutase-like activity. Shows reductant-dependent oxidase and hydrogen peroxide reductase activities. Reduces copper-levels in liver in a rat model of Wilson disease. The sequence is that of Methanobactin mb-OB3b from Methylosinus trichosporium.